The following is a 505-amino-acid chain: MLFLNAKFIDLDLGENAVIVNEDDLKGTSYYPQDRVLIESHAGSVIGNIYSTKTMVQKGEVGMLVSELAEISISEGEEVKLRHAEKPESIPFIKKKMDGQVLNPHEIRTIIDEIVSKKLSNIELSAFVSSTYINGMNMDEIGEMTKRIAETGDMISWEKNLVVDIHSIGGVPGNKYALLSIPILAAAGITIPKTSSRAITSPAGTADVMEVLTNVELKEDEIKRIVKTTNGCLVWGGGVNLAPADDIIINVERPVSIDPQPQLLASVMAKKIATGIKYSVIDIPVGKGVKIKNEAEGAKLARKFIELGELLNIKVECVLTYGGQPLGRAIGPALEAKEAIEALQDPKNAPKSLIEKALSLAGILLELGGAAQIGEGQNLAWEILESGRALEKFNQIIIEQGGTPKKPEEIELGDYIEEIIAPIDGYVTDINNTGITNVVKEAGAPRDKKAGLLLNSKIGNKVKKGDVLYTIYSGSEERLVSAVNLARRVYPVKVEGMLIERISKF.

Residues G170, 196-201 (SRAITS), and T205 contribute to the AMP site. D258 functions as the Proton donor in the catalytic mechanism. AMP contacts are provided by S266 and K290.

The protein belongs to the thymidine/pyrimidine-nucleoside phosphorylase family. Type 2 subfamily.

It catalyses the reaction AMP + phosphate = alpha-D-ribose 1,5-bisphosphate + adenine. The enzyme catalyses CMP + phosphate = cytosine + alpha-D-ribose 1,5-bisphosphate. The catalysed reaction is UMP + phosphate = alpha-D-ribose 1,5-bisphosphate + uracil. Functionally, catalyzes the conversion of AMP and phosphate to adenine and ribose 1,5-bisphosphate (R15P). Exhibits phosphorylase activity toward CMP and UMP in addition to AMP. Functions in an archaeal AMP degradation pathway, together with R15P isomerase and RubisCO. The protein is AMP phosphorylase of Methanococcus maripaludis (strain DSM 14266 / JCM 13030 / NBRC 101832 / S2 / LL).